A 438-amino-acid polypeptide reads, in one-letter code: Putative pectate lyase 14 (438 aa).

An N-terminal signal peptide occupies residues 1 to 26 (MVVARTLFSISATLIIFLALFLHVNA). N-linked (GlcNAc...) asparagine glycosylation is found at Asn-40, Asn-46, and Asn-73. Positions 236, 260, and 264 each coordinate Ca(2+). The active site involves Arg-316.

Belongs to the polysaccharide lyase 1 family. Ca(2+) is required as a cofactor.

The enzyme catalyses Eliminative cleavage of (1-&gt;4)-alpha-D-galacturonan to give oligosaccharides with 4-deoxy-alpha-D-galact-4-enuronosyl groups at their non-reducing ends.. It functions in the pathway glycan metabolism; pectin degradation; 2-dehydro-3-deoxy-D-gluconate from pectin: step 2/5. This chain is Putative pectate lyase 14, found in Arabidopsis thaliana (Mouse-ear cress).